The following is a 454-amino-acid chain: Glutamyl-tRNA reductase (454 aa).

Substrate is bound by residues Thr-50–Arg-53, Ser-103, Glu-108–Gln-110, and Gln-114. The active-site Nucleophile is the Cys-51. Residue Gly-182–Gly-187 coordinates NADP(+). A disordered region spans residues Leu-407 to Gly-454. Composition is skewed to basic and acidic residues over residues Gln-418–Ile-434 and Val-443–Gly-454.

This sequence belongs to the glutamyl-tRNA reductase family. Homodimer.

It carries out the reaction (S)-4-amino-5-oxopentanoate + tRNA(Glu) + NADP(+) = L-glutamyl-tRNA(Glu) + NADPH + H(+). It participates in porphyrin-containing compound metabolism; protoporphyrin-IX biosynthesis; 5-aminolevulinate from L-glutamyl-tRNA(Glu): step 1/2. In terms of biological role, catalyzes the NADPH-dependent reduction of glutamyl-tRNA(Glu) to glutamate 1-semialdehyde (GSA). The protein is Glutamyl-tRNA reductase of Haloquadratum walsbyi (strain DSM 16790 / HBSQ001).